The sequence spans 790 residues: PGC-1 and ERR-induced regulator in muscle protein 1 (790 aa).

4 disordered regions span residues 38-391 (LLSS…TPIS), 425-449 (VASSPPVSEAVPRMTESSGLVSTPV), 507-545 (SVAGPSPNKPGSGQASARPSAPQTATGAHGGPGAWEAVA), and 626-648 (QRSRRRGSPEPLPRADPVPAPIP). Residues 40-52 (SSDIDQGDSSGSS) show a composition bias toward low complexity. Composition is skewed to polar residues over residues 80–89 (ATQQPVSRSQ) and 98–107 (TGQQTPSTSA). The segment covering 111–123 (APPSLGPGASPPS) has biased composition (low complexity). The segment covering 146–157 (APRPPGEPPGSP) has biased composition (pro residues). Positions 158–169 (KSPGHSTGSQRP) are enriched in low complexity. A compositionally biased stretch (pro residues) spans 170-179 (PDSPGAPPRS). The segment covering 366-391 (KPQSDTAVSTPASEPQSSVALSTPIS) has biased composition (polar residues). Positions 515 to 532 (KPGSGQASARPSAPQTAT) are enriched in polar residues. A compositionally biased stretch (pro residues) spans 635 to 648 (EPLPRADPVPAPIP).

As to expression, muscle-specific expression is increased by endurance exercise.

It localises to the cytoplasm. The protein localises to the nucleus. Its function is as follows. Regulates the expression of selective PPARGC1A/B and ESRRA/B/G target genes with roles in glucose and lipid metabolism, energy transfer, contractile function, muscle mitochondrial biogenesis and oxidative capacity. Required for the efficient induction of MT-CO2, MT-CO3, COX4I1, TFB1M, TFB2M, POLRMT and SIRT3 by PPARGC1A. Positively regulates the PPARGC1A/ESRRG-induced expression of CKMT2, TNNI3 and SLC2A4 and negatively regulates the PPARGC1A/ESRRG-induced expression of PDK4. This Homo sapiens (Human) protein is PGC-1 and ERR-induced regulator in muscle protein 1 (PERM1).